The primary structure comprises 232 residues: Peptidoglycan-recognition protein LB (232 aa).

An N-terminal signal peptide occupies residues 1–15 (MTALGLVLLSMMGYS). In terms of domain architecture, N-acetylmuramoyl-L-alanine amidase spans 53–179 (APYVIIHHSY…RQVRDTECPG (127 aa)). Residue H59 coordinates Zn(2+). Residues C67 and C73 are joined by a disulfide bond. Zn(2+) is bound by residues H169 and C177. N-linked (GlcNAc...) asparagine glycosylation occurs at N196. The segment at 213-232 (HPQAAAPQKPHQSPPAAPKV) is disordered.

Belongs to the N-acetylmuramoyl-L-alanine amidase 2 family. Monomer. Requires Zn(2+) as cofactor. As to expression, widely expressed.

It is found in the secreted. The enzyme catalyses Hydrolyzes the link between N-acetylmuramoyl residues and L-amino acid residues in certain cell-wall glycopeptides.. Its function is as follows. N-acetylmuramyl-L-alanine amidase involved in innate immunity by degrading bacterial peptidoglycans (PGN). Probably plays a scavenger role by digesting biologically active PGN into biologically inactive fragments. Has no direct bacteriolytic activity. The sequence is that of Peptidoglycan-recognition protein LB (PGRP-LB) from Drosophila melanogaster (Fruit fly).